The following is a 271-amino-acid chain: Interleukin-1 alpha (271 aa).

Positions 1–112 are excised as a propeptide; the sequence is MAKVPDMFED…DSEEEIIKPR (112 aa). Residue K82 is modified to N6-acetyllysine. 2 N6-myristoyl lysine lipidation sites follow: K82 and K83. The tract at residues 82-86 is nuclear localization signal (NLS); that stretch reads KKRRL. S87 carries the phosphoserine modification. N102 and N141 each carry an N-linked (GlcNAc...) asparagine glycan.

It belongs to the IL-1 family. As to quaternary structure, monomer. Interacts with TMED10; the interaction mediates the translocation from the cytoplasm into the ERGIC (endoplasmic reticulum-Golgi intermediate compartment) and thereby secretion. Interacts with IL1R1. Interacts with S100A13; this interaction is the first step in the export of IL1A, followed by direct translocation of this complex across the plasma membrane. Post-translationally, acetylated within its nuclear localization sequence, which impacts subcellular localization. Proteolytic processed by CAPN1 in a calcium-dependent manner. Cleavage from 31 kDa precursor to 18 kDa biologically active molecules. In terms of processing, phosphorylated. Phosphorylation greatly enhances susceptibility to digestion and promotes the conversion of pre-IL1A alpha to the biologically active IL1A.

Its subcellular location is the nucleus. The protein localises to the cytoplasm. It is found in the secreted. Its function is as follows. Cytokine constitutively present intracellularly in nearly all resting non-hematopoietic cells that plays an important role in inflammation and bridges the innate and adaptive immune systems. After binding to its receptor IL1R1 together with its accessory protein IL1RAP, forms the high affinity interleukin-1 receptor complex. Signaling involves the recruitment of adapter molecules such as MYD88, IRAK1 or IRAK4. In turn, mediates the activation of NF-kappa-B and the three MAPK pathways p38, p42/p44 and JNK pathways. Within the cell, acts as an alarmin and cell death results in its liberation in the extracellular space after disruption of the cell membrane to induce inflammation and alert the host to injury or damage. In addition to its role as a danger signal, which occurs when the cytokine is passively released by cell necrosis, directly senses DNA damage and acts as a signal for genotoxic stress without loss of cell integrity. The sequence is that of Interleukin-1 alpha (IL1A) from Homo sapiens (Human).